The following is a 752-amino-acid chain: Neuroendocrine convertase 1 (752 aa).

Positions 1-27 (MKQRGWTLQCTAFTLFCVWCALNSVKA) are cleaved as a signal peptide. Positions 28–110 (KRQFVNEWAA…QQYEKERRKR (83 aa)) are excised as a propeptide. The 322-residue stretch at 129-450 (QWYLQDTRMT…FGLLNAKALV (322 aa)) folds into the Peptidase S8 domain. Residue D167 is the Charge relay system of the active site. N-linked (GlcNAc...) asparagine glycosylation occurs at N173. The active-site Charge relay system is H208. 2 disulfides stabilise this stretch: C225-C374 and C317-C347. The Charge relay system role is filled by S382. The N-linked (GlcNAc...) asparagine glycan is linked to N401. A P/Homo B domain is found at 460 to 597 (NVPEKKECII…KLILHGTSSQ (138 aa)). Cysteines 467 and 494 form a disulfide. Residues 631–662 (PTQNSLNGNLLVPKNSSSSSVEDRRDEQVQGA) form a disordered region. The N-linked (GlcNAc...) asparagine glycan is linked to N645.

The protein belongs to the peptidase S8 family. Furin subfamily. Requires Ca(2+) as cofactor.

It localises to the cytoplasmic vesicle. Its subcellular location is the secretory vesicle. The enzyme catalyses Release of protein hormones, neuropeptides and renin from their precursors, generally by hydrolysis of -Lys-Arg-|- bonds.. Functionally, involved in the processing of hormone and other protein precursors at sites comprised of pairs of basic amino acid residues. Substrates include POMC, renin, enkephalin, dynorphin, somatostatin, insulin and AGRP. This is Neuroendocrine convertase 1 (Pcsk1) from Rattus norvegicus (Rat).